The following is a 481-amino-acid chain: Halobacterial transducer protein 9 (481 aa).

A PAS domain is found at 10-81 (SPFTVPLLLN…NKVADTPIDA (72 aa)). The 237-residue stretch at 208-444 (DVERLEAASQ…EIAAMVDETA (237 aa)) folds into the Methyl-accepting transducer domain.

It belongs to the methyl-accepting chemotaxis (MCP) protein family.

The protein localises to the cytoplasm. In terms of biological role, potentially involved in chemo- or phototactic signal transduction. This chain is Halobacterial transducer protein 9 (htr9), found in Halobacterium salinarum (strain ATCC 700922 / JCM 11081 / NRC-1) (Halobacterium halobium).